We begin with the raw amino-acid sequence, 722 residues long: Polyribonucleotide nucleotidyltransferase (722 aa).

The Mg(2+) site is built by D486 and D492. The region spanning 553–612 (PRITTIQIRPEFIKNVIGPGGKVIKDIIARTGAAINIEDSGRVDIASANGEAVKAAIAMI) is the KH domain. Residues 622 to 690 (GKIYTGTVRK…KTGKIRLSRK (69 aa)) enclose the S1 motif domain. Residues 696-722 (RAAQQGAAAGEAAAQPAPAPTQPDAKA) form a disordered region.

Belongs to the polyribonucleotide nucleotidyltransferase family. Mg(2+) serves as cofactor.

Its subcellular location is the cytoplasm. It carries out the reaction RNA(n+1) + phosphate = RNA(n) + a ribonucleoside 5'-diphosphate. Involved in mRNA degradation. Catalyzes the phosphorolysis of single-stranded polyribonucleotides processively in the 3'- to 5'-direction. This Myxococcus xanthus (strain DK1622) protein is Polyribonucleotide nucleotidyltransferase.